The chain runs to 3587 residues: Tyrocidine synthase 2 (3587 aa).

The tract at residues 466-1045 is domain 1 (Proline-activating); that stretch reads AATMHELFSR…IQALAAYVEG (580 aa). 2 consecutive Carrier domains span residues 972-1047 and 2007-2082; these read APTT…EGGE and APAT…EHSE. An O-(pantetheine 4'-phosphoryl)serine mark is found at serine 1007 and serine 2042. The domain 2 (Phenylalanine-activating) stretch occupies residues 1522–2081; sequence EQTAVVFGDK…RDLARLIEHS (560 aa). The segment at 2540-3122 is domain 3 (D-phenylalanine-activating); the sequence is YRADQTIQQL…NSRESEQGVV (583 aa). The segment at 3017-3040 is disordered; the sequence is NDKIDRKALPKPNQEENRTEQYAA. The segment covering 3018-3035 has biased composition (basic and acidic residues); that stretch reads DKIDRKALPKPNQEENRT. Positions 3040-3114 constitute a Carrier 3 domain; that stretch reads APQTELEQLL…EAALRVIPNS (75 aa). An O-(pantetheine 4'-phosphoryl)serine modification is found at serine 3075.

It belongs to the ATP-dependent AMP-binding enzyme family. Large multienzyme complex of TycA, TycB and TycC. The cofactor is pantetheine 4'-phosphate.

The catalysed reaction is L-phenylalanine + ATP + H2O = D-phenylalanine + AMP + diphosphate + H(+). It participates in antibiotic biosynthesis; tyrocidine biosynthesis. In terms of biological role, activates the second to fourth amino acids in tyrocidine (in tyrocidine A, Pro, Phe, and D-Phe) and epimerizes the last one. The protein is Tyrocidine synthase 2 (tycB) of Brevibacillus parabrevis.